A 251-amino-acid chain; its full sequence is Ubiquinone/menaquinone biosynthesis C-methyltransferase UbiE (251 aa).

S-adenosyl-L-methionine-binding positions include threonine 74, aspartate 95, 123-124 (NA), and serine 140.

This sequence belongs to the class I-like SAM-binding methyltransferase superfamily. MenG/UbiE family.

The catalysed reaction is a 2-demethylmenaquinol + S-adenosyl-L-methionine = a menaquinol + S-adenosyl-L-homocysteine + H(+). It carries out the reaction a 2-methoxy-6-(all-trans-polyprenyl)benzene-1,4-diol + S-adenosyl-L-methionine = a 5-methoxy-2-methyl-3-(all-trans-polyprenyl)benzene-1,4-diol + S-adenosyl-L-homocysteine + H(+). It participates in quinol/quinone metabolism; menaquinone biosynthesis; menaquinol from 1,4-dihydroxy-2-naphthoate: step 2/2. Its pathway is cofactor biosynthesis; ubiquinone biosynthesis. In terms of biological role, methyltransferase required for the conversion of demethylmenaquinol (DMKH2) to menaquinol (MKH2) and the conversion of 2-polyprenyl-6-methoxy-1,4-benzoquinol (DDMQH2) to 2-polyprenyl-3-methyl-6-methoxy-1,4-benzoquinol (DMQH2). This Proteus mirabilis (strain HI4320) protein is Ubiquinone/menaquinone biosynthesis C-methyltransferase UbiE.